A 157-amino-acid chain; its full sequence is Siroheme decarboxylase NirG subunit (157 aa).

This sequence belongs to the Ahb/Nir family. As to quaternary structure, forms a complex composed of NirDL, NirG and NirH. All proteins are required for the total conversion of siroheme to didecarboxysiroheme.

The catalysed reaction is siroheme + 2 H(+) = 12,18-didecarboxysiroheme + 2 CO2. It functions in the pathway porphyrin-containing compound metabolism. Functionally, involved in heme d1 biosynthesis. Catalyzes the decarboxylation of siroheme into didecarboxysiroheme. Siroheme is probably decarboxylated to monodecarboxysiroheme, which is in turn decarboxylated to didecarboxysiroheme. In Paracoccus pantotrophus (Thiosphaera pantotropha), this protein is Siroheme decarboxylase NirG subunit.